The following is a 348-amino-acid chain: Galanin receptor type 1 (348 aa).

Topologically, residues 1-34 (MELAMVNLSEGNGSDPEPPAPESRPLFGIGVENF) are extracellular. Asn-7 and Asn-12 each carry an N-linked (GlcNAc...) asparagine glycan. A helical membrane pass occupies residues 35–55 (ITLVVFGLIFAMGVLGNSLVI). Over 56–70 (TVLARSKPGKPRSTT) the chain is Cytoplasmic. Residues 71 to 91 (NLFILNLSIADLAYLLFCIPF) form a helical membrane-spanning segment. Residues 92–109 (QATVYALPTWVLGAFICK) are Extracellular-facing. A disulfide bridge connects residues Cys-108 and Cys-186. A helical transmembrane segment spans residues 110–131 (FIHYFFTVSMLVSIFTLAAMSV). At 132-151 (DRYVAIVHSRRSSSLRVSRN) the chain is on the cytoplasmic side. Residues 152–172 (ALLGVGFIWALSIAMASPVAY) form a helical membrane-spanning segment. Residues 173 to 197 (HQRLFHRDSNQTFCWEQWPNKLHKK) lie on the Extracellular side of the membrane. N-linked (GlcNAc...) asparagine glycosylation occurs at Asn-182. A helical membrane pass occupies residues 198–218 (AYVVCTFVFGYLLPLLLICFC). Residues 219–247 (YAKVLNHLHKKLKNMSKKSEASKKKTAQT) lie on the Cytoplasmic side of the membrane. A helical membrane pass occupies residues 248-268 (VLVVVVVFGISWLPHHVVHLW). Residues 269–270 (AE) are Extracellular-facing. A helical membrane pass occupies residues 271–291 (FGAFPLTPASFFFRITAHCLA). Over 292-348 (YSNSSVNPIIYAFLSENFRKAYKQVFKCHVCDESPRSETKENKSRMDTPPSTNCTHV) the chain is Cytoplasmic. Cys-319 carries the S-palmitoyl cysteine lipid modification. The span at 328-337 (SETKENKSRM) shows a compositional bias: basic and acidic residues. Residues 328–348 (SETKENKSRMDTPPSTNCTHV) are disordered.

Belongs to the G-protein coupled receptor 1 family. Interacts with GRP39 AND HTR1A. Three cysteine residues are found in the C-terminus, at least one of which may be palmitoylated. Expression is detected in brain, spinal cord, heart and skeletal muscle.

It is found in the cell membrane. Receptor for the hormone galanin. The activity of this receptor is mediated by G proteins that inhibit adenylate cyclase activity. This Mus musculus (Mouse) protein is Galanin receptor type 1 (Galr1).